The chain runs to 921 residues: Probable glucan 1,3-alpha-glucosidase (921 aa).

A signal peptide spans Met-1–Ser-20. Asp-512 functions as the Nucleophile in the catalytic mechanism. Glu-515 is a catalytic residue. Residue Asp-588 is the Proton donor of the active site. N-linked (GlcNAc...) asparagine glycosylation is found at Asn-689 and Asn-804.

Belongs to the glycosyl hydrolase 31 family. Heterodimer of a catalytic alpha subunit (PSL5) and a beta subunit (PSL4). In terms of tissue distribution, expressed in roots, rosette leaves, leaf blades, mature stems, cauline leaves, flower buds, flowers and siliques.

It localises to the endoplasmic reticulum. It carries out the reaction Hydrolysis of terminal (1-&gt;3)-alpha-D-glucosidic links in (1-&gt;3)-alpha-D-glucans.. It functions in the pathway glycan metabolism; N-glycan metabolism. In terms of biological role, cleaves sequentially the 2 innermost alpha-1,3-linked glucose residues from the Glc(2)Man(9)GlcNAc(2) oligosaccharide precursor of immature glycoproteins. Essential for stable accumulation of the receptor EFR that determines the specific perception of bacterial elongation factor Tu (EF-Tu), a potent elicitor of the defense response to pathogen-associated molecular patterns (PAMPs). Required for sustained activation of EFR-mediated signaling, but not receptor FLS2-mediated signaling elicited by the bacterial flagellin flg22. The sequence is that of Probable glucan 1,3-alpha-glucosidase (PSL5) from Arabidopsis thaliana (Mouse-ear cress).